The sequence spans 267 residues: Energy-coupling factor transporter transmembrane protein EcfT (267 aa).

5 helical membrane passes run 26 to 46 (IILTFIMMIFIFLINTYWGYL), 73 to 93 (ILFIVVFAGIINIFMIKGTVI), 116 to 136 (LFLLIITASLLTYTTTPIALT), 151 to 171 (VPVHEIAMMMTIALRFIPTLL), and 247 to 267 (LVTGITVVFMTWVILMEYVFF).

The protein belongs to the energy-coupling factor EcfT family. As to quaternary structure, forms a stable energy-coupling factor (ECF) transporter complex composed of 2 membrane-embedded substrate-binding proteins (S component), 2 ATP-binding proteins (A component) and 2 transmembrane proteins (T component). May be able to interact with more than 1 S component at a time.

Its subcellular location is the cell membrane. Its function is as follows. Transmembrane (T) component of an energy-coupling factor (ECF) ABC-transporter complex. Unlike classic ABC transporters this ECF transporter provides the energy necessary to transport a number of different substrates. The polypeptide is Energy-coupling factor transporter transmembrane protein EcfT (Ruminiclostridium cellulolyticum (strain ATCC 35319 / DSM 5812 / JCM 6584 / H10) (Clostridium cellulolyticum)).